Here is a 428-residue protein sequence, read N- to C-terminus: 3-phosphoshikimate 1-carboxyvinyltransferase (428 aa).

Lysine 23, serine 24, and arginine 28 together coordinate 3-phosphoshikimate. A phosphoenolpyruvate-binding site is contributed by lysine 23. Phosphoenolpyruvate-binding residues include glycine 97 and arginine 125. 7 residues coordinate 3-phosphoshikimate: serine 170, serine 171, glutamine 172, serine 198, aspartate 314, asparagine 338, and lysine 342. Glutamine 172 serves as a coordination point for phosphoenolpyruvate. The Proton acceptor role is filled by aspartate 314. 3 residues coordinate phosphoenolpyruvate: arginine 346, arginine 388, and lysine 413.

This sequence belongs to the EPSP synthase family. Monomer.

The protein localises to the cytoplasm. It catalyses the reaction 3-phosphoshikimate + phosphoenolpyruvate = 5-O-(1-carboxyvinyl)-3-phosphoshikimate + phosphate. The protein operates within metabolic intermediate biosynthesis; chorismate biosynthesis; chorismate from D-erythrose 4-phosphate and phosphoenolpyruvate: step 6/7. Functionally, catalyzes the transfer of the enolpyruvyl moiety of phosphoenolpyruvate (PEP) to the 5-hydroxyl of shikimate-3-phosphate (S3P) to produce enolpyruvyl shikimate-3-phosphate and inorganic phosphate. This is 3-phosphoshikimate 1-carboxyvinyltransferase from Baumannia cicadellinicola subsp. Homalodisca coagulata.